We begin with the raw amino-acid sequence, 145 residues long: Sporulation-specific cell division protein Francci3_3418 (145 aa).

The protein belongs to the SsgA family.

It localises to the cell septum. Functionally, involved in sporulation-specific cell division. This is Sporulation-specific cell division protein Francci3_3418 from Frankia casuarinae (strain DSM 45818 / CECT 9043 / HFP020203 / CcI3).